The primary structure comprises 151 residues: Caveolin-3 (151 aa).

At 1-83 (MMAEEHTDLE…RLLSTLLGVP (83 aa)) the chain is on the cytoplasmic side. A Glycyl lysine isopeptide (Lys-Gly) (interchain with G-Cter in SUMO3) cross-link involves residue Lys-38. Positions 64 to 114 (TFTVSKYWCYRLLSTLLGVPLALLWGFLFACISFCHIWAVVPCIKSYLIEI) are required for interaction with DAG1. The segment at residues 84–104 (LALLWGFLFACISFCHIWAVV) is an intramembrane region (helical). The Cytoplasmic segment spans residues 105–151 (PCIKSYLIEIQCISHIYSLCIRTFCNPLFAALGQVCSNIKVMLRKEV).

This sequence belongs to the caveolin family. Homooligomer. Interacts with DYSF. Interacts with DLG1 and KCNA5; forms a ternary complex. Interacts with DAG1 (via its C-terminal); the interaction prevents binding of DAG1 with DMD. Interacts with TRIM72. Interacts with MUSK; may regulate MUSK signaling. Interacts with POPDC1. Interacts with CAVIN1, CAVIN2 and CAVIN4. Sumoylation with SUMO3 by PIAS4 may reduce agonist-induced internalization and desensitization of adrenergic receptor ABRD2.

The protein resides in the golgi apparatus membrane. The protein localises to the cell membrane. It is found in the membrane. It localises to the caveola. Its subcellular location is the sarcolemma. In terms of biological role, may act as a scaffolding protein within caveolar membranes. Interacts directly with G-protein alpha subunits and can functionally regulate their activity. May also regulate voltage-gated potassium channels. Plays a role in the sarcolemma repair mechanism of both skeletal muscle and cardiomyocytes that permits rapid resealing of membranes disrupted by mechanical stress. Mediates the recruitment of CAVIN2 and CAVIN3 proteins to the caveolae. In Bos taurus (Bovine), this protein is Caveolin-3 (CAV3).